A 336-amino-acid chain; its full sequence is Coproporphyrin III ferrochelatase (336 aa).

2 residues coordinate Fe-coproporphyrin III: S52 and Y116. Residues H172 and E255 each contribute to the Fe(2+) site.

The protein belongs to the ferrochelatase family.

It is found in the cytoplasm. It carries out the reaction Fe-coproporphyrin III + 2 H(+) = coproporphyrin III + Fe(2+). It participates in porphyrin-containing compound metabolism; protoheme biosynthesis. In terms of biological role, involved in coproporphyrin-dependent heme b biosynthesis. Catalyzes the insertion of ferrous iron into coproporphyrin III to form Fe-coproporphyrin III. The protein is Coproporphyrin III ferrochelatase of Mycolicibacterium paratuberculosis (strain ATCC BAA-968 / K-10) (Mycobacterium paratuberculosis).